Consider the following 348-residue polypeptide: Probable dual-specificity RNA methyltransferase RlmN (348 aa).

Glu-95 (proton acceptor) is an active-site residue. One can recognise a Radical SAM core domain in the interval 101–335 (SGNRLTICVS…VSLRASRGLD (235 aa)). Cys-108 and Cys-340 are joined by a disulfide. Cys-115, Cys-119, and Cys-122 together coordinate [4Fe-4S] cluster. S-adenosyl-L-methionine is bound by residues 162-163 (GE), Ser-192, 221-223 (SLH), and Asn-297. Cys-340 (S-methylcysteine intermediate) is an active-site residue.

Belongs to the radical SAM superfamily. RlmN family. The cofactor is [4Fe-4S] cluster.

The protein resides in the cytoplasm. The catalysed reaction is adenosine(2503) in 23S rRNA + 2 reduced [2Fe-2S]-[ferredoxin] + 2 S-adenosyl-L-methionine = 2-methyladenosine(2503) in 23S rRNA + 5'-deoxyadenosine + L-methionine + 2 oxidized [2Fe-2S]-[ferredoxin] + S-adenosyl-L-homocysteine. It catalyses the reaction adenosine(37) in tRNA + 2 reduced [2Fe-2S]-[ferredoxin] + 2 S-adenosyl-L-methionine = 2-methyladenosine(37) in tRNA + 5'-deoxyadenosine + L-methionine + 2 oxidized [2Fe-2S]-[ferredoxin] + S-adenosyl-L-homocysteine. In terms of biological role, specifically methylates position 2 of adenine 2503 in 23S rRNA and position 2 of adenine 37 in tRNAs. The protein is Probable dual-specificity RNA methyltransferase RlmN of Prochlorococcus marinus (strain SARG / CCMP1375 / SS120).